The chain runs to 268 residues: Transcription initiation factor TFIID subunit 14b (268 aa).

The segment covering 1-20 has biased composition (polar residues); it reads MTNSSSSKKQAQDQPETSEP. Residues 1–36 form a disordered region; it reads MTNSSSSKKQAQDQPETSEPTLKSLKTKMTKSDEKQ. The YEATS domain maps to 38–182; that stretch reads KLKDIEISVP…ESFLARVQNH (145 aa). The stretch at 229–263 forms a coiled coil; that stretch reads DELLQLAAARQQVQAHIAKLRRQISLLEGQNQTVK.

This sequence belongs to the YAF9 family. In terms of assembly, component of the TFIID complex. TFIID is composed of TATA binding protein (TBP) and a number of TBP-associated factors (TAFs) whose MWs range from 14-217 kDa. Interacts with TAF1, TAF4B and TAF12B. Component of the SWR1 chromatin-remodeling complex. Interacts with FLX, a component of the transcription activator complex FRI-C. Interacts with SWC4, and with EAF1A and EAF1B (via HSA domain). In terms of tissue distribution, expressed in roots, leaves, inflorescence and flowering tissues.

Its subcellular location is the cytoplasm. It is found in the nucleus. Functionally, negative regulator of flowering controlling the H4K5 acetylation levels in the FLC and FT chromatin. Positively regulates FLC expression. Component of the transcription factor IID (TFIID) complex that is essential for mediating regulation of RNA polymerase transcription. Component of the SWR1 complex which mediates the ATP-dependent exchange of histone H2A for the H2A variant HZT1 leading to transcriptional regulation of selected genes by chromatin remodeling. Component of a NuA4 histone acetyltransferase complex which is involved in transcriptional activation of selected genes principally by acetylation of nucleosomal histones H4 and H2A. This Arabidopsis thaliana (Mouse-ear cress) protein is Transcription initiation factor TFIID subunit 14b.